The sequence spans 270 residues: Shikimate dehydrogenase (NADP(+)) (270 aa).

Shikimate-binding positions include 14-16 (SKS) and Thr-60. Lys-64 serves as the catalytic Proton acceptor. An NADP(+)-binding site is contributed by Glu-76. Asn-85 and Asp-101 together coordinate shikimate. NADP(+)-binding positions include 125–129 (GAGGA), 149–154 (NRTASR), and Met-213. Position 215 (Tyr-215) interacts with shikimate. NADP(+) is bound at residue Gly-236.

It belongs to the shikimate dehydrogenase family. As to quaternary structure, homodimer.

It catalyses the reaction shikimate + NADP(+) = 3-dehydroshikimate + NADPH + H(+). It functions in the pathway metabolic intermediate biosynthesis; chorismate biosynthesis; chorismate from D-erythrose 4-phosphate and phosphoenolpyruvate: step 4/7. Its function is as follows. Involved in the biosynthesis of the chorismate, which leads to the biosynthesis of aromatic amino acids. Catalyzes the reversible NADPH linked reduction of 3-dehydroshikimate (DHSA) to yield shikimate (SA). The polypeptide is Shikimate dehydrogenase (NADP(+)) (Stutzerimonas stutzeri (strain A1501) (Pseudomonas stutzeri)).